A 542-amino-acid polypeptide reads, in one-letter code: CTP synthase (542 aa).

Positions 1–265 (MARYVFITGG…DDEVLAAFGI (265 aa)) are amidoligase domain. Ser13 lines the CTP pocket. Residue Ser13 coordinates UTP. ATP contacts are provided by residues 14-19 (SLGKGI) and Asp71. Mg(2+) is bound by residues Asp71 and Glu139. Residues 146–148 (DIE), 186–191 (KTKPTQ), and Lys222 each bind CTP. Residues 186–191 (KTKPTQ) and Lys222 each bind UTP. A Glutamine amidotransferase type-1 domain is found at 291–541 (TIAIVGKYTG…IEAATEQSRL (251 aa)). Residue Gly353 coordinates L-glutamine. The active-site Nucleophile; for glutamine hydrolysis is Cys380. L-glutamine contacts are provided by residues 381–384 (FGMQ), Glu404, and Arg469. Residues His514 and Glu516 contribute to the active site.

It belongs to the CTP synthase family. Homotetramer.

It catalyses the reaction UTP + L-glutamine + ATP + H2O = CTP + L-glutamate + ADP + phosphate + 2 H(+). The catalysed reaction is L-glutamine + H2O = L-glutamate + NH4(+). The enzyme catalyses UTP + NH4(+) + ATP = CTP + ADP + phosphate + 2 H(+). The protein operates within pyrimidine metabolism; CTP biosynthesis via de novo pathway; CTP from UDP: step 2/2. Its activity is regulated as follows. Allosterically activated by GTP, when glutamine is the substrate; GTP has no effect on the reaction when ammonia is the substrate. The allosteric effector GTP functions by stabilizing the protein conformation that binds the tetrahedral intermediate(s) formed during glutamine hydrolysis. Inhibited by the product CTP, via allosteric rather than competitive inhibition. In terms of biological role, catalyzes the ATP-dependent amination of UTP to CTP with either L-glutamine or ammonia as the source of nitrogen. Regulates intracellular CTP levels through interactions with the four ribonucleotide triphosphates. The protein is CTP synthase of Rhizobium etli (strain ATCC 51251 / DSM 11541 / JCM 21823 / NBRC 15573 / CFN 42).